Consider the following 392-residue polypeptide: Formate-dependent phosphoribosylglycinamide formyltransferase (392 aa).

Residues 22 to 23 (EL) and E82 each bind N(1)-(5-phospho-beta-D-ribosyl)glycinamide. Residues R114, K155, 160–165 (SSGHGQ), 195–198 (EGFI), and E203 contribute to the ATP site. An ATP-grasp domain is found at 119-307 (RLAAEELGLK…QFALHARAIL (189 aa)). Mg(2+) is bound by residues E266 and E278. Residues D285, K355, and 362–363 (RR) contribute to the N(1)-(5-phospho-beta-D-ribosyl)glycinamide site.

This sequence belongs to the PurK/PurT family. As to quaternary structure, homodimer.

It localises to the cell inner membrane. The enzyme catalyses N(1)-(5-phospho-beta-D-ribosyl)glycinamide + formate + ATP = N(2)-formyl-N(1)-(5-phospho-beta-D-ribosyl)glycinamide + ADP + phosphate + H(+). Its pathway is purine metabolism; IMP biosynthesis via de novo pathway; N(2)-formyl-N(1)-(5-phospho-D-ribosyl)glycinamide from N(1)-(5-phospho-D-ribosyl)glycinamide (formate route): step 1/1. In terms of biological role, involved in the de novo purine biosynthesis. Catalyzes the transfer of formate to 5-phospho-ribosyl-glycinamide (GAR), producing 5-phospho-ribosyl-N-formylglycinamide (FGAR). Formate is provided by PurU via hydrolysis of 10-formyl-tetrahydrofolate. The sequence is that of Formate-dependent phosphoribosylglycinamide formyltransferase from Mannheimia haemolytica (Pasteurella haemolytica).